The following is a 234-amino-acid chain: Purine nucleoside phosphorylase DeoD-type (234 aa).

H4 serves as a coordination point for a purine D-ribonucleoside. Phosphate is bound by residues G20, R24, R43, and 87–90; that span reads RIGT. Residues 179-181 and 203-204 contribute to the a purine D-ribonucleoside site; these read EME and SD. The active-site Proton donor is D204.

The protein belongs to the PNP/UDP phosphorylase family. As to quaternary structure, homohexamer; trimer of homodimers.

The enzyme catalyses a purine D-ribonucleoside + phosphate = a purine nucleobase + alpha-D-ribose 1-phosphate. It carries out the reaction a purine 2'-deoxy-D-ribonucleoside + phosphate = a purine nucleobase + 2-deoxy-alpha-D-ribose 1-phosphate. Its function is as follows. Catalyzes the reversible phosphorolytic breakdown of the N-glycosidic bond in the beta-(deoxy)ribonucleoside molecules, with the formation of the corresponding free purine bases and pentose-1-phosphate. The protein is Purine nucleoside phosphorylase DeoD-type of Helicobacter pylori (strain Shi470).